We begin with the raw amino-acid sequence, 433 residues long: Urokinase-type plasminogen activator (433 aa).

The first 20 residues, Met1–Gly20, serve as a signal peptide directing secretion. Positions Gly29–Glu65 constitute an EGF-like domain. Disulfide bonds link Cys33-Cys41, Cys35-Cys53, Cys55-Cys64, Cys72-Cys153, Cys93-Cys135, and Cys124-Cys148. Positions Leu36–Phe59 are binds urokinase plasminogen activator surface receptor. Positions Cys72–Cys153 constitute a Kringle domain. Positions Ser154–Lys180 are connecting peptide. Residue Ser160 is modified to Phosphoserine. 6 disulfides stabilise this stretch: Cys170/Cys301, Cys211/Cys227, Cys219/Cys290, Cys315/Cys384, Cys347/Cys363, and Cys374/Cys402. The Peptidase S1 domain maps to Ile181 to Arg426. Catalysis depends on charge relay system residues His226 and Asp277. The active-site Charge relay system is the Ser378.

The protein belongs to the peptidase S1 family. In terms of assembly, found in high and low molecular mass forms. Each consists of two chains, A and B. The high molecular mass form contains a long chain A which is cleaved to yield a short chain A. Forms heterodimer with SERPINA5. Binds LRP1B; binding is followed by internalization and degradation. Interacts with MRC2. Interacts with PLAUR. In complex with SERPINE1, interacts with PLAUR/uPAR. Interacts with SORL1 and LRP1, either alone or in complex with SERPINE1; these interactions are abolished in the presence of LRPAP1/RAP. The ternary complex composed of PLAUR-PLAU-PAI1 also interacts with SORLA. Produced as an inactive single-chain protein (pro-uPA or sc-uPA), is processed into the active disulfide-linked two-chain form of PLAU/uPA by a proteolytic event mediated, at least, by TMPRSS4.

The protein localises to the secreted. It carries out the reaction Specific cleavage of Arg-|-Val bond in plasminogen to form plasmin.. With respect to regulation, inhibited by SERPINA5. Inhibited by SERPINE1. Specifically cleaves the zymogen plasminogen to form the active enzyme plasmin. The protein is Urokinase-type plasminogen activator (PLAU) of Bos taurus (Bovine).